Here is a 1353-residue protein sequence, read N- to C-terminus: Xanthine dehydrogenase (1353 aa).

The 2Fe-2S ferredoxin-type domain occupies 17–104 (STLIFFVNGK…GSAVTTVEGI (88 aa)). Residues cysteine 56, cysteine 61, cysteine 64, cysteine 86, cysteine 126, cysteine 129, cysteine 161, and cysteine 163 each contribute to the [2Fe-2S] cluster site. The FAD-binding PCMH-type domain maps to 245–434 (YKGERATWYR…VGLYFPKTLE (190 aa)). Residues 273 to 280 (LVVGNTEI), phenylalanine 353, 363 to 367 (SLGGN), aspartate 376, leucine 424, and lysine 442 contribute to the FAD site. Mo-molybdopterin-binding residues include glutamine 790 and phenylalanine 821. Glutamate 825 and arginine 903 together coordinate substrate. Arginine 935 is a Mo-molybdopterin binding site. A substrate-binding site is contributed by phenylalanine 937. Alanine 1102 contacts Mo-molybdopterin. Residue glutamate 1285 is the Proton acceptor of the active site.

The protein belongs to the xanthine dehydrogenase family. In terms of assembly, homodimer. FAD serves as cofactor. It depends on Mo-molybdopterin as a cofactor. The cofactor is [2Fe-2S] cluster.

It localises to the peroxisome. The catalysed reaction is xanthine + NAD(+) + H2O = urate + NADH + H(+). It catalyses the reaction hypoxanthine + NAD(+) + H2O = xanthine + NADH + H(+). Key enzyme in purine degradation. Catalyzes the oxidation of hypoxanthine to xanthine. Catalyzes the oxidation of xanthine to uric acid. This chain is Xanthine dehydrogenase (XDH), found in Calliphora vicina (Blue blowfly).